The primary structure comprises 361 residues: POU domain, class 3, transcription factor 4 (361 aa).

Disordered stretches follow at residues 99–131 and 144–192; these read PHVA…GQPL and MLEH…PTSD. The span at 119-131 shows a compositional bias: polar residues; it reads APNSSITSSGQPL. Residues 165–183 show a composition bias toward basic and acidic residues; that stretch reads VLREPPDHGELGSHHCQDH. The 75-residue stretch at 186–260 folds into the POU-specific domain; the sequence is EETPTSDELE…LLNKWLEEAD (75 aa). Phosphoserine is present on Ser-265. A DNA-binding region (homeobox) is located at residues 278–337; the sequence is KRKKRTSIEVSVKGVLETHFLKCPKPAAQEISSLADSLQLEKEVVRVWFCNRRQKEKRMT. A disordered region spans residues 334 to 361; sequence KRMTPPGDQQPHEVYSHTVKTDASCHDL. Basic and acidic residues predominate over residues 343 to 361; the sequence is QPHEVYSHTVKTDASCHDL.

It belongs to the POU transcription factor family. Class-3 subfamily. Interacts with HNRNPU. As to expression, brain specific.

The protein resides in the nucleus. Its function is as follows. Probable transcription factor which exert its primary action widely during early neural development and in a very limited set of neurons in the mature brain. This chain is POU domain, class 3, transcription factor 4 (Pou3f4), found in Mus musculus (Mouse).